An 816-amino-acid polypeptide reads, in one-letter code: Transcription factor qa-1f (816 aa).

The zn(2)-C6 fungal-type DNA-binding region spans 76–103 (CDQCRAAREKCDGIQPACFPCVSQGRSC). Residues 184-202 (SGQAAQDPSEDGQSPSEDI) show a composition bias toward polar residues. Positions 184–235 (SGQAAQDPSEDGQSPSEDINVQDAGAKTSDFPHAPHLTFSAPKSSTAETRTL) are disordered.

Its subcellular location is the nucleus. In terms of biological role, transcription activator; part of the qa gene cluster that mediates the catabolism of quinic acid (QA) and as such, allows the use of QA as a sole carbon source. Activates the expression of qa cluster genes by binding to a 16 base-pair consensus sequence 5'-GGRTAARYRYTTAYCC-3' present in the promoters of the target genes. Regulates its own expression. May regulate the expression of many other genes inclusing genes with products in 8 mutually connected metabolic pathways: (1) starch and sucrose metabolism; (2) glycolysis/glucanogenesis; (3) TCA Cycle; (4) butanoate metabolism; (5) pyruvate metabolism; (6) aromatic amino acid and QA metabolism; (7) valine, leucine, and isoleucine degradation; and (8) transport of sugars and amino acids. The chain is Transcription factor qa-1f from Neurospora crassa (strain ATCC 24698 / 74-OR23-1A / CBS 708.71 / DSM 1257 / FGSC 987).